The primary structure comprises 333 residues: Flagellar P-ring protein (333 aa).

The N-terminal stretch at 1–22 is a signal peptide; the sequence is MRRNILSMFLFITLIIYSSIFA.

It belongs to the FlgI family. In terms of assembly, the basal body constitutes a major portion of the flagellar organelle and consists of four rings (L,P,S, and M) mounted on a central rod.

The protein resides in the periplasm. It is found in the bacterial flagellum basal body. Its function is as follows. Assembles around the rod to form the L-ring and probably protects the motor/basal body from shearing forces during rotation. In Fervidobacterium nodosum (strain ATCC 35602 / DSM 5306 / Rt17-B1), this protein is Flagellar P-ring protein.